The following is an 824-amino-acid chain: Protein-glutamine gamma-glutamyltransferase K (824 aa).

Positions 1–10 (MEGPRSDVGR) are enriched in basic and acidic residues. 2 disordered regions span residues 1–44 (MEGP…GGRS) and 61–110 (DDWG…AAGD). At Thr20 the chain carries Phosphothreonine. Phosphoserine occurs at positions 22, 70, 92, 100, and 103. Residues 65 to 76 (PEPSGSRSRGTS) show a composition bias toward low complexity. The span at 85 to 100 (GDSRGRDSRGGRRPES) shows a compositional bias: basic and acidic residues. Residues Cys385, His444, and Asp467 contribute to the active site. Ca(2+)-binding residues include Asn507, Asp509, Glu556, and Glu561. The disordered stretch occupies residues 801 to 824 (RGFSEAVGDSRSGENIPMAFRGGA). Ser812 carries the post-translational modification Phosphoserine.

The protein belongs to the transglutaminase superfamily. Transglutaminase family. Interacts with PLAAT4. Ca(2+) is required as a cofactor. In terms of processing, palmitoylated. The membrane anchorage region possesses a cluster of five cysteines within which fatty acid(s) may become thioester-linked. It is subject to phorbol ester-stimulated phosphorylation and is hypersensitive to proteolysis, which releases the enzyme in a soluble form. Post-translationally, tyrosine-phosphorylated.

It localises to the membrane. The enzyme catalyses L-glutaminyl-[protein] + L-lysyl-[protein] = [protein]-L-lysyl-N(6)-5-L-glutamyl-[protein] + NH4(+). In terms of biological role, catalyzes the cross-linking of proteins and the conjugation of polyamines to proteins. Responsible for cross-linking epidermal proteins during formation of the stratum corneum. Involved in cell proliferation. The sequence is that of Protein-glutamine gamma-glutamyltransferase K (Tgm1) from Rattus norvegicus (Rat).